The primary structure comprises 156 residues: Calglandulin (156 aa).

4 EF-hand domains span residues 8–43, 44–79, 82–117, and 118–153; these read EQIT…VGIN, PTKR…YHEK, NQDE…AGEP, and LNEQ…ESFK. Positions 131, 133, 135, 137, and 142 each coordinate Ca(2+).

The protein belongs to the calmodulin family. Calglandulin subfamily. In terms of tissue distribution, expressed by the venom gland.

It is found in the cytoplasm. May be involved in the cellular control mechanism of the secretion of toxins from the gland into the venom. This chain is Calglandulin, found in Bothrops insularis (Golden lancehead).